A 399-amino-acid chain; its full sequence is Fe-coproporphyrin III synthase (399 aa).

Positions 36–253 (KDKKPVVVWN…TRKLHEKGFP (218 aa)) constitute a Radical SAM core domain. Positions 50, 54, and 57 each coordinate [4Fe-4S] cluster.

Belongs to the radical SAM superfamily. [4Fe-4S] cluster is required as a cofactor.

It catalyses the reaction 12,18-didecarboxysiroheme + 2 AH2 + 2 S-adenosyl-L-methionine = Fe-coproporphyrin III + 2 5'-deoxyadenosine + 2 L-methionine + 2 acetate + 2 A + 2 H(+). The protein operates within porphyrin-containing compound metabolism; protoheme biosynthesis. Functionally, involved in siroheme-dependent heme b biosynthesis. Catalyzes the conversion of didecarboxysiroheme into Fe-coproporphyrin III by oxidative loss of two acetic acid side chains. The polypeptide is Fe-coproporphyrin III synthase (Methanosarcina barkeri (strain Fusaro / DSM 804)).